A 360-amino-acid chain; its full sequence is SPRY domain-containing SOCS box protein 3 (360 aa).

Residues R20 to H55 form a disordered region. One can recognise a B30.2/SPRY domain in the interval L85 to R274. Positions S264–W315 constitute an SOCS box domain. Residues R323–D350 form a disordered region. The segment covering T331 to T346 has biased composition (low complexity).

The protein belongs to the SPSB family. Substrate-recognition component of the ECS(SPSB3) complex, composed of spsb3, cul5, elob, elob and rnf7/rbx2.

The protein resides in the nucleus. It participates in protein modification; protein ubiquitination. Its function is as follows. Substrate-recognition component of a cullin-5-RING E3 ubiquitin-protein ligase complex (ECS complex, also named CRL5 complex), which mediates the ubiquitination and subsequent proteasomal degradation of target proteins. This chain is SPRY domain-containing SOCS box protein 3 (spsb3), found in Xenopus tropicalis (Western clawed frog).